Consider the following 244-residue polypeptide: tRNA pseudouridine synthase A (244 aa).

Aspartate 52 acts as the Nucleophile in catalysis. Residue tyrosine 111 coordinates substrate.

Belongs to the tRNA pseudouridine synthase TruA family. As to quaternary structure, homodimer.

It catalyses the reaction uridine(38/39/40) in tRNA = pseudouridine(38/39/40) in tRNA. Its function is as follows. Formation of pseudouridine at positions 38, 39 and 40 in the anticodon stem and loop of transfer RNAs. The chain is tRNA pseudouridine synthase A from Thermosipho africanus (strain TCF52B).